We begin with the raw amino-acid sequence, 636 residues long: Chaperone protein HtpG (636 aa).

Residues 1–349 (MAKHQFQTEV…SEDLPLNVSR (349 aa)) are a; substrate-binding. Positions 350–562 (EILQENRILA…ADAQMAAMAH (213 aa)) are b. Residues 563–636 (MFRAMGQAMP…RLSRITAKAL (74 aa)) form a c region.

The protein belongs to the heat shock protein 90 family. In terms of assembly, homodimer.

Its subcellular location is the cytoplasm. In terms of biological role, molecular chaperone. Has ATPase activity. The protein is Chaperone protein HtpG of Aliarcobacter butzleri (strain RM4018) (Arcobacter butzleri).